We begin with the raw amino-acid sequence, 429 residues long: Acetyltransferase pyr8 (429 aa).

A run of 9 helical transmembrane segments spans residues Ile-12–Thr-32, Leu-39–Leu-56, Gly-69–Thr-89, Tyr-154–Met-174, Val-221–Ala-241, Ile-300–Ile-320, Gly-324–Val-344, Leu-365–Pro-385, and Val-409–Ile-429.

It belongs to the wax synthase family.

The protein localises to the membrane. The protein operates within secondary metabolite biosynthesis; terpenoid biosynthesis. Its function is as follows. Acetyltransferase; part of the gene cluster that mediates the biosynthesis of pyripyropene A, a specific human acyl-coenzyme A:cholesterol acyltransferase 2 inhibitor. The first step of the pathway is the synthesis of nicotinyl-CoA from nicotinic acid by the nicotinic acid-CoA ligase pyr1. Nicotinyl-CoA is then a substrate of polyketide synthase pyr2 to produce 4-hydroxy-6-(3-pyridinyl)-2H-pyran-2-one (HPPO) which is further prenylated by the polyprenyl transferase pyr6 to yield farnesyl-HPPO. The next steps consist of an epoxidation of farnesyl-HPPO to epoxyfarnesyl-HPPO by FAD-dependent monooxygenase pyr5 and a cyclization of the terpenoid portion by the terpene cyclase pyr4 to yield deacetyl-pyripyropene E. The 2 cytochrome P450 monooxygenases pyr3 and pyr9, and the 2 acetyltransferases pyr7 and pyr8 are involved in the conversion of deacetyl-pyripyropene E into pyripyropene A through several cycles of oxidation and acetylation steps. Pyr7 acetylates deacetyl-pyripyropene E to pyripyropene E which is oxidized to 11-deacetyl-pyripyropene O by pyr3, which is in turn acetylated into pyripyropene O by pyr8. Pyripyropene O is then oxidized to deacetyl-pyripyropene A by pyr9. Deacetyl-pyripyropene A is finally acetylated to pyripyropene A by pyr8. This is Acetyltransferase pyr8 from Aspergillus fumigatus (strain ATCC MYA-4609 / CBS 101355 / FGSC A1100 / Af293) (Neosartorya fumigata).